We begin with the raw amino-acid sequence, 290 residues long: HTH-type transcriptional activator RhaR (290 aa).

The HTH araC/xylS-type domain maps to 179 to 277; the sequence is DLIMSALQQS…GMTPRDYRQR (99 aa). 2 consecutive DNA-binding regions (H-T-H motif) follow at residues 196 to 217 and 244 to 267; these read ANFC…RQQT and ISDI…TREA.

In terms of assembly, binds DNA as a dimer.

It localises to the cytoplasm. Its function is as follows. Activates expression of the rhaSR operon in response to L-rhamnose. The sequence is that of HTH-type transcriptional activator RhaR from Yersinia pseudotuberculosis serotype O:3 (strain YPIII).